Consider the following 146-residue polypeptide: Snaclec coagulation factor IX/factor X-binding protein subunit B (146 aa).

The N-terminal stretch at 1 to 23 (MGRFIFMSFGFLVVFLSLSGTAA) is a signal peptide. One can recognise a C-type lectin domain in the interval 24–146 (DCPSDWSSYE…MAQFVCEFQA (123 aa)). 3 disulfide bridges follow: Cys-25–Cys-36, Cys-53–Cys-142, and Cys-119–Cys-134. 3 residues coordinate Ca(2+): Ser-64, Gln-66, and Glu-70. A Ca(2+)-binding site is contributed by Glu-143.

The protein belongs to the snaclec family. In terms of assembly, heterodimer with subunit A of IX/X-bp or IX-bp; disulfide-linked. Expressed by the venom gland.

The protein resides in the secreted. In terms of biological role, when linked to subunit A of IX/X-bp, anticoagulant protein which binds to the gamma-carboxyglutamic acid-domain regions of factors IX (F9) and factor X (10) in the presence of calcium with a 1 to 1 stoichiometry. Functionally, when linked to subunit A of IX-bp, anticoagulant protein which binds to the gamma-carboxyglutamic acid-domain regions of factor IX (but not to factor X) in the presence of calcium with a 1 to 1 stoichiometry. The chain is Snaclec coagulation factor IX/factor X-binding protein subunit B from Protobothrops flavoviridis (Habu).